Here is a 469-residue protein sequence, read N- to C-terminus: Putative dipeptidase SH1171 (469 aa).

Histidine 84 contributes to the Zn(2+) binding site. The active site involves aspartate 86. Aspartate 115 serves as a coordination point for Zn(2+). Residue glutamate 149 is the Proton acceptor of the active site. Zn(2+) is bound by residues glutamate 150, aspartate 173, and histidine 440.

Belongs to the peptidase M20A family. Zn(2+) is required as a cofactor.

In Staphylococcus haemolyticus (strain JCSC1435), this protein is Putative dipeptidase SH1171.